The sequence spans 541 residues: Zinc finger CCHC domain-containing protein 7 (541 aa).

Positions 111–144 (AEEKTQSPATSHSNKVAQKCKRNNKKPKPEERPG) are disordered. The span at 116–126 (QSPATSHSNKV) shows a compositional bias: polar residues. Glycyl lysine isopeptide (Lys-Gly) (interchain with G-Cter in SUMO2) cross-links involve residues Lys129, Lys136, Lys138, Lys234, and Lys249. CCHC-type zinc fingers lie at residues 236–253 (VTCR…NCPL), 258–275 (RACC…GCPA), and 299–316 (KRCD…ACPE). Lys334 participates in a covalent cross-link: Glycyl lysine isopeptide (Lys-Gly) (interchain with G-Cter in SUMO2). The segment at 343 to 360 (VYCYNCAQKGHYGHECTE) adopts a CCHC-type 4 zinc-finger fold. Residues 394–541 (VKDLKKNGDF…KKKKPKPSGL (148 aa)) are disordered. Residues Lys408 and Lys431 each participate in a glycyl lysine isopeptide (Lys-Gly) (interchain with G-Cter in SUMO2) cross-link. The segment covering 418-434 (RRHHDMRKSRSPRKYRR) has biased composition (basic residues). Basic and acidic residues predominate over residues 435–452 (WPRENKETQKEKTRSREG). Lys473 participates in a covalent cross-link: Glycyl lysine isopeptide (Lys-Gly) (interchain with G-Cter in SUMO2). Polar residues predominate over residues 474–486 (PNASGCANNQKPS). Ser477 is modified (phosphoserine). Glycyl lysine isopeptide (Lys-Gly) (interchain with G-Cter in SUMO2) cross-links involve residues Lys484 and Lys487. Basic residues predominate over residues 487 to 497 (KSLHHASHYHR). Basic and acidic residues-rich tracts occupy residues 498–509 (LREERLLRESKR) and 517–527 (STEDGSHDDLF). Residue Lys530 forms a Glycyl lysine isopeptide (Lys-Gly) (interchain with G-Cter in SUMO2) linkage. Residues 530-541 (KQKKKKPKPSGL) are compositionally biased toward basic residues.

In terms of assembly, component of a nucleolar TRAMP-like complex, an ATP-dependent exosome regulatory complex consisting of a helicase (MTREX), an oligadenylate polymerase (TENT4B or TENT4A), and a substrate specific RNA-binding factor (ZCCHC7 or ZCCHC8). Several TRAMP-like complexes exist with specific compositions and are associated with nuclear, or nucleolar RNA exosomes.

The protein localises to the nucleus. It is found in the nucleolus. This chain is Zinc finger CCHC domain-containing protein 7 (Zcchc7), found in Mus musculus (Mouse).